The sequence spans 136 residues: Large-conductance mechanosensitive channel (136 aa).

The next 4 membrane-spanning stretches (helical) occupy residues 9 to 29 (AFASRGNVIDMAVGIIIGAAF), 32 to 52 (IVSSFVADIIMPPIGIILGGV), 54 to 74 (FSDLSVVLLAAQGDAPAVVIA), and 79 to 99 (IQTVIDFTIIAFAIFMGLKAI).

The protein belongs to the MscL family. Homopentamer.

It is found in the cell inner membrane. Functionally, channel that opens in response to stretch forces in the membrane lipid bilayer. May participate in the regulation of osmotic pressure changes within the cell. This is Large-conductance mechanosensitive channel from Shewanella oneidensis (strain ATCC 700550 / JCM 31522 / CIP 106686 / LMG 19005 / NCIMB 14063 / MR-1).